Here is a 161-residue protein sequence, read N- to C-terminus: Large ribosomal subunit protein uL10 (161 aa).

Belongs to the universal ribosomal protein uL10 family. Part of the ribosomal stalk of the 50S ribosomal subunit. The N-terminus interacts with L11 and the large rRNA to form the base of the stalk. The C-terminus forms an elongated spine to which L12 dimers bind in a sequential fashion forming a multimeric L10(L12)X complex.

In terms of biological role, forms part of the ribosomal stalk, playing a central role in the interaction of the ribosome with GTP-bound translation factors. This Campylobacter fetus subsp. fetus (strain 82-40) protein is Large ribosomal subunit protein uL10.